Reading from the N-terminus, the 173-residue chain is Orotate phosphoribosyltransferase (173 aa).

5-phospho-alpha-D-ribose 1-diphosphate contacts are provided by residues arginine 87, lysine 88, lysine 91, and 113–121 (EDIATTGQS). The orotate site is built by threonine 117 and arginine 145.

This sequence belongs to the purine/pyrimidine phosphoribosyltransferase family. PyrE subfamily. In terms of assembly, homodimer. Requires Mg(2+) as cofactor.

The catalysed reaction is orotidine 5'-phosphate + diphosphate = orotate + 5-phospho-alpha-D-ribose 1-diphosphate. Its pathway is pyrimidine metabolism; UMP biosynthesis via de novo pathway; UMP from orotate: step 1/2. Functionally, catalyzes the transfer of a ribosyl phosphate group from 5-phosphoribose 1-diphosphate to orotate, leading to the formation of orotidine monophosphate (OMP). This chain is Orotate phosphoribosyltransferase, found in Natronomonas pharaonis (strain ATCC 35678 / DSM 2160 / CIP 103997 / JCM 8858 / NBRC 14720 / NCIMB 2260 / Gabara) (Halobacterium pharaonis).